The primary structure comprises 402 residues: MEGSDFILVVDSSVEEQVEELAMYLDNLEANTDKNVLALCREYLASENVKEVLNLFLTRLPLLAQAPEKELEPILAVFINLIQESAAFEDHVSKFCQALEQIADQNNNLTPAILSVLSILFNTAVKERQHARLSILTSVVTLTTRYSLFSTLAPNLKYFPDWLKEAGVSVSDHRAFNIFVSKAIQSYDDEQSFAFLLEAVKMDNSTADEAVRELVQRAVNSPKYFFFDDIVTLPPVQQLEQSTLQLLGILSGGMTDDYVSWVAENHAHCQHQKFDEDAIARKMKLLTIASLATQAPNNTLSYGDVAKSLKIDENEVELWIIDVIRAGLVEGRMSQLTKTLSIHRSSYRVFGKHEWVALHEKLAKWGSSLRYMLQVMEQPLSSFTIASSKKGNRDGSAVTASE.

One can recognise a PCI domain in the interval 188–347 (DDEQSFAFLL…KTLSIHRSSY (160 aa)).

Belongs to the eIF-3 subunit M family. In terms of assembly, component of the eukaryotic translation initiation factor 3 (eIF-3) complex. The eIF-3 complex appears to include tif32/eif3a, SPAC25G10.08/eif3b, tif33/eif3c, SPBC4C3.07/eif3f, tif35/eif3g and sum1/eif3i. This set of common subunits may also associate exclusively with either moe1/eif3d and int6/eif3e, or with SPAC821.05/eif3h and SPAC1751.03/eif3m. The eIF-3 complex may also include SPAC3A12.13c/eif3j.

Its subcellular location is the cytoplasm. Component of the eukaryotic translation initiation factor 3 (eIF-3) complex, which is involved in protein synthesis of a specialized repertoire of mRNAs and, together with other initiation factors, stimulates binding of mRNA and methionyl-tRNAi to the 40S ribosome. The eIF-3 complex specifically targets and initiates translation of a subset of mRNAs involved in cell proliferation. This chain is Eukaryotic translation initiation factor 3 subunit M (eif3m), found in Schizosaccharomyces pombe (strain 972 / ATCC 24843) (Fission yeast).